The chain runs to 381 residues: Bifunctional polyhydroxybutyrate synthase / ABC transporter periplasmic binding protein (381 aa).

A signal peptide spans 1 to 22 (MSKTFARSSLCALSMTIMTAHA).

It belongs to the bacterial solute-binding protein PotD/PotF family.

The protein localises to the periplasm. The catalysed reaction is (3R)-3-hydroxybutanoyl-CoA + [(3R)-hydroxybutanoate](n) = [(3R)-hydroxybutanoate](n+1) + CoA. Catalyzes the formation of short polymers of R-3-hydroxybutyrate (cPHB). Involved in natural transformation. Probably part of the ABC transporter complex YdcSTUV. During natural transformation, may bind dsDNA and convey it to the inner membrane channel formed by YdcV. This is Bifunctional polyhydroxybutyrate synthase / ABC transporter periplasmic binding protein (ydcS) from Escherichia coli (strain K12).